The sequence spans 579 residues: L-ascorbate oxidase (579 aa).

Positions 1-30 (MLQMGKAREPNFLILFFFGLILAFGISSEG) are cleaved as a signal peptide. 2 consecutive Plastocyanin-like domains span residues 33 to 152 (IRHY…LIVD) and 164 to 330 (DGEI…NYLP). 3 disulfides stabilise this stretch: cysteine 49/cysteine 231, cysteine 111/cysteine 568, and cysteine 210/cysteine 223. Positions 90 and 92 each coordinate Cu cation. An N-linked (GlcNAc...) asparagine glycan is attached at asparagine 122. Histidine 134 and histidine 136 together coordinate Cu cation. Residues asparagine 355 and asparagine 470 are each glycosylated (N-linked (GlcNAc...) asparagine). A Plastocyanin-like 3 domain is found at 374-553 (NRRIFLLNTQ…HMGMGVVFAE (180 aa)). Histidine 475, histidine 478, histidine 480, histidine 536, cysteine 537, histidine 538, histidine 542, and methionine 547 together coordinate Cu cation.

The protein belongs to the multicopper oxidase family. In terms of assembly, dimer. Cu cation is required as a cofactor.

The protein resides in the secreted. The catalysed reaction is 4 L-ascorbate + O2 = 4 monodehydro-L-ascorbate radical + 2 H2O. Functionally, may be involved in a redox system involving ascorbic acid. In Cucurbita maxima (Pumpkin), this protein is L-ascorbate oxidase (AAO).